Here is a 435-residue protein sequence, read N- to C-terminus: Diguanylate cyclase TpbB (435 aa).

The Cytoplasmic portion of the chain corresponds to 1–22 (MNRRRRYTGSNPSLRRVLYRAH). The chain crosses the membrane as a helical span at residues 23-43 (LGVALVAVFTAGLAVTLVGLL). The Periplasmic segment spans residues 44-154 (TLRAYADPNQ…VKGSGGSLLR (111 aa)). A helical membrane pass occupies residues 155-175 (FLLTGFAGMVLCLLLTALGAF). Residues 176–435 (YLSRRLVRGI…DSATPEAPPK (260 aa)) are Cytoplasmic-facing. An HAMP domain is found at 183–236 (RGIVGPLDQLAKVAHTVRRERDFEKRVPEAGIAELSQLGEDFNALLDELESWQA). Positions 279-415 (EQLAVLFIDS…GSRRLAELND (137 aa)) constitute a GGDEF domain. Residues S288 and D330 each coordinate Mg(2+). D330 serves as the catalytic Proton acceptor. A compositionally biased stretch (basic and acidic residues) spans 413-426 (LNDPRILQEEKEID). The interval 413-435 (LNDPRILQEEKEIDSATPEAPPK) is disordered.

In terms of assembly, homodimer. Interacts with YfiR. It depends on Mg(2+) as a cofactor. In terms of processing, phosphorylated at both Tyr residues and Ser/Thr residues. Dephosphorylated and inactivated by TpbA.

The protein resides in the cell inner membrane. The enzyme catalyses 2 GTP = 3',3'-c-di-GMP + 2 diphosphate. Its pathway is purine metabolism; 3',5'-cyclic di-GMP biosynthesis. Its activity is regulated as follows. Activity is tightly controlled by YfiR, a small periplasmic protein, and the OmpA/Pal-like outer-membrane lipoprotein YfiB. Diguanylate cyclase activity is inhibited by the specific interaction of YfiR with the TpbB periplasmic domain and is activated by YfiB, which releases the YfiR-mediated repression through sequestration of YfiR to the outer membrane. Release of repression leads to a conformational shift in TpbB/YfiN that propagates through the PAS and transmembrane domains to switch the cytoplasmic HAMP domain from an inactive to an active conformation and activate the C-terminal catalytic GGDEF domain. Thus, TpbB/YfiN appears to function by switching between discrete inactive and active functional states depending on the presence or absence of bound YfiR. Activity is also controlled by dephosphorylation of the periplasmic domain by the tyrosine phosphatase TpbA. These two mechanisms of regulation could in principle work in parallel or as part of the same regulatory pathway. Does not undergo product feedback inhibition. Its function is as follows. Catalyzes the synthesis of cyclic-di-GMP (c-di-GMP) via the condensation of 2 GTP molecules. In terms of biological role, part of the YfiB-TpbB-YfiR (or yfiBNR) system, encoding a tripartite signaling module that modulates intracellular c-di-GMP levels. The system is a key regulator of the small colony variant (SCV) phenotype, and plays an important role in biofilm formation and in vivo persistence. The c-di-GMP produced by TpbB/YfiN stimulates the production of the Pel and Psl exopolysaccharides, which promotes surface attachment, generates an SCV phenotype and confers resistance against phagocytosis. The polypeptide is Diguanylate cyclase TpbB (Pseudomonas aeruginosa (strain ATCC 15692 / DSM 22644 / CIP 104116 / JCM 14847 / LMG 12228 / 1C / PRS 101 / PAO1)).